A 178-amino-acid chain; its full sequence is Ribosome maturation factor RimM (178 aa).

Residues 101-178 enclose the PRC barrel domain; sequence EGEFYWYQLQ…EMRVDWDADF (78 aa).

It belongs to the RimM family. As to quaternary structure, binds ribosomal protein uS19.

The protein localises to the cytoplasm. Functionally, an accessory protein needed during the final step in the assembly of 30S ribosomal subunit, possibly for assembly of the head region. Essential for efficient processing of 16S rRNA. May be needed both before and after RbfA during the maturation of 16S rRNA. It has affinity for free ribosomal 30S subunits but not for 70S ribosomes. The chain is Ribosome maturation factor RimM from Ectopseudomonas mendocina (strain ymp) (Pseudomonas mendocina).